Consider the following 251-residue polypeptide: Ribonuclease HII (251 aa).

Residues 32–223 enclose the RNase H type-2 domain; that stretch reads GPVAGVDEAG…VRERLGLRPL (192 aa). A divalent metal cation contacts are provided by aspartate 38, glutamate 39, and aspartate 132.

It belongs to the RNase HII family. The cofactor is Mn(2+). Requires Mg(2+) as cofactor.

Its subcellular location is the cytoplasm. It carries out the reaction Endonucleolytic cleavage to 5'-phosphomonoester.. Functionally, endonuclease that specifically degrades the RNA of RNA-DNA hybrids. The sequence is that of Ribonuclease HII from Nocardia farcinica (strain IFM 10152).